Reading from the N-terminus, the 288-residue chain is uncharacterized protein (288 aa).

Residues 107–288 (KQIPTLIGPQ…LAIQLLASIA (182 aa)) form the ATP-grasp domain. ATP is bound by residues Lys145 and 178-188 (QQYIATSNSEA). The Mg(2+) site is built by Asp248, Glu261, and Asn263. Mn(2+) is bound by residues Asp248, Glu261, and Asn263.

The protein belongs to the RimK family.

This is an uncharacterized protein from Mycoplasma pneumoniae (strain ATCC 29342 / M129 / Subtype 1) (Mycoplasmoides pneumoniae).